We begin with the raw amino-acid sequence, 101 residues long: Putative pterin-4-alpha-carbinolamine dehydratase (101 aa).

It belongs to the pterin-4-alpha-carbinolamine dehydratase family.

It catalyses the reaction (4aS,6R)-4a-hydroxy-L-erythro-5,6,7,8-tetrahydrobiopterin = (6R)-L-erythro-6,7-dihydrobiopterin + H2O. This chain is Putative pterin-4-alpha-carbinolamine dehydratase, found in Nitrobacter hamburgensis (strain DSM 10229 / NCIMB 13809 / X14).